Here is a 236-residue protein sequence, read N- to C-terminus: tRNA (guanine-N(7)-)-methyltransferase (236 aa).

The S-adenosyl-L-methionine site is built by glutamate 43, aspartate 68, asparagine 102, and asparagine 125. The substrate site is built by lysine 129 and aspartate 161.

Belongs to the class I-like SAM-binding methyltransferase superfamily. TrmB family.

The enzyme catalyses guanosine(46) in tRNA + S-adenosyl-L-methionine = N(7)-methylguanosine(46) in tRNA + S-adenosyl-L-homocysteine. It participates in tRNA modification; N(7)-methylguanine-tRNA biosynthesis. Catalyzes the formation of N(7)-methylguanine at position 46 (m7G46) in tRNA. In Ruminiclostridium cellulolyticum (strain ATCC 35319 / DSM 5812 / JCM 6584 / H10) (Clostridium cellulolyticum), this protein is tRNA (guanine-N(7)-)-methyltransferase.